Here is a 218-residue protein sequence, read N- to C-terminus: Probable septum site-determining protein MinC (218 aa).

The protein belongs to the MinC family. Interacts with MinD and FtsZ.

Its function is as follows. Cell division inhibitor that blocks the formation of polar Z ring septums. Rapidly oscillates between the poles of the cell to destabilize FtsZ filaments that have formed before they mature into polar Z rings. Prevents FtsZ polymerization. The sequence is that of Probable septum site-determining protein MinC from Kosmotoga olearia (strain ATCC BAA-1733 / DSM 21960 / TBF 19.5.1).